We begin with the raw amino-acid sequence, 322 residues long: MEQPMKPTVIITGASSGVGLYGAKALIDKGWHVIMACRNLDKTQKVADELGFPKDSYTIIKLDLGYLDSVRRFVAQFRELGRPLKALVCNAAVYFPLLDEPLWSADDYELSVATNHLGHFLLCNLLLEDLKACPDADKRLIILGTVTANSKELGGKIPIPAPPDLGNFEGFEAGFKKPIAMINNKKFKSGKAYKDSKLCNMLTTRELHRRFHQETGIVFNSLYPGCVADTPLFRNHYSLFRTIFPWFQKNVTKGYVSQELAGERVAMVVADDKFKDSGVHWSWGNRQQAGREAFVQELSEQGSDAQKAQRMWDLSEKLVGLV.

This sequence belongs to the short-chain dehydrogenases/reductases (SDR) family. POR subfamily.

It catalyses the reaction chlorophyllide a + NADP(+) = protochlorophyllide a + NADPH + H(+). It participates in porphyrin-containing compound metabolism; chlorophyll biosynthesis. Its function is as follows. Phototransformation of protochlorophyllide (Pchlide) to chlorophyllide (Chlide). This is Light-dependent protochlorophyllide reductase (por) from Synechocystis sp. (strain ATCC 27184 / PCC 6803 / Kazusa).